A 264-amino-acid polypeptide reads, in one-letter code: MMHSKKLTLGICLVLLIILIVGYVIMTKANGQNAQIKDTFNQTLKLYPTKNLDDFYDKEGFRDQEFKKGDKGTWIVNSGMNIQLKGGALKSREMVLYINRNTRKTKGYFIVGEITKDKKGYTHDKDKKYPVKMEHNKIIPTKPIKDEKLKKEIENFKFFVQYGNFKDFKDYKNGDISYNPNVPSYSAKYQLSNDDYNIQQLRKRYDIPTKKAPELLLKGDGDLKGSSIGSKDLEFTFVQNKRENIYFTDSVEFTPSEDTSYESN.

A helical membrane pass occupies residues Leu-7 to Thr-27.

It belongs to the staphylococcal tandem lipoprotein family.

It is found in the cell membrane. This is an uncharacterized protein from Staphylococcus aureus (strain MW2).